The following is a 170-amino-acid chain: Putative pre-16S rRNA nuclease (170 aa).

The protein belongs to the YqgF nuclease family.

It is found in the cytoplasm. In terms of biological role, could be a nuclease involved in processing of the 5'-end of pre-16S rRNA. This chain is Putative pre-16S rRNA nuclease, found in Synechococcus sp. (strain JA-2-3B'a(2-13)) (Cyanobacteria bacterium Yellowstone B-Prime).